A 427-amino-acid chain; its full sequence is MQNSLDLKPISHVNGTVCLPGSKSISNRVLLLSSIAKGTTCLTNLLNSHDTQHMLNALKKLGVRYNLSDDKKTCHVQGIGGPFHLSEAISLYLGNAGTAIRPLLSVLSLHKNNILLNGDDRMHERPIGDLVDALIQGGAVIEYKKNKGYPPICTKGGFLGGSIFLNGNISSQFLTSLLISTPLALKDTTIFIKGNLVSKPYIDITLNLIKIFGVNIEHDSYNVFYIKGKQQYKTPGKYTIEGDASSASYFLAAAAIKGGSVKVTGVGKKSIQGDIEFANILEKMGATIFWEDYSITCTRNKLNAIDLDMNHIPDAAMTVAILALFSKGTTIIRNIYNWRVKETDRLSAMTIELRKIGAIVEEGRDFLSISPPIFFQYSSIETYNDHRMAMCFSLISLSGVGVNILNPNCISKTFPSYFKDFLSISKI.

3-phosphoshikimate-binding residues include K23, S24, and R28. K23 lines the phosphoenolpyruvate pocket. Phosphoenolpyruvate contacts are provided by G97 and R125. 3-phosphoshikimate-binding residues include S170, S171, Q172, S198, D314, N337, and K341. Q172 lines the phosphoenolpyruvate pocket. D314 acts as the Proton acceptor in catalysis. Phosphoenolpyruvate is bound by residues R345, R387, and K412.

The protein belongs to the EPSP synthase family. Monomer.

Its subcellular location is the cytoplasm. It catalyses the reaction 3-phosphoshikimate + phosphoenolpyruvate = 5-O-(1-carboxyvinyl)-3-phosphoshikimate + phosphate. It participates in metabolic intermediate biosynthesis; chorismate biosynthesis; chorismate from D-erythrose 4-phosphate and phosphoenolpyruvate: step 6/7. Functionally, catalyzes the transfer of the enolpyruvyl moiety of phosphoenolpyruvate (PEP) to the 5-hydroxyl of shikimate-3-phosphate (S3P) to produce enolpyruvyl shikimate-3-phosphate and inorganic phosphate. This is 3-phosphoshikimate 1-carboxyvinyltransferase from Buchnera aphidicola subsp. Acyrthosiphon pisum (strain Tuc7).